Here is a 75-residue protein sequence, read N- to C-terminus: Large ribosomal subunit protein bL31 (75 aa).

The protein belongs to the bacterial ribosomal protein bL31 family. Type A subfamily. As to quaternary structure, part of the 50S ribosomal subunit.

Its function is as follows. Binds the 23S rRNA. The chain is Large ribosomal subunit protein bL31 from Nitrobacter winogradskyi (strain ATCC 25391 / DSM 10237 / CIP 104748 / NCIMB 11846 / Nb-255).